Here is a 758-residue protein sequence, read N- to C-terminus: Microtubule-associated protein tau (758 aa).

The segment covering 1–26 (MAEPHQEFDVTEDHAGTYGLGDRKDQ) has biased composition (basic and acidic residues). Residues 1–573 (MAEPHQEFDV…PVPMPDLKNV (573 aa)) form a disordered region. Ala-2 is modified (N-acetylalanine). A phosphotyrosine mark is found at Tyr-18 and Tyr-29. Residue Lys-44 forms a Glycyl lysine isopeptide (Lys-Gly) (interchain with G-Cter in ubiquitin) linkage. Ser-46 and Ser-61 each carry phosphoserine. Residues 61–71 (SETSDAKSTPT) show a composition bias toward polar residues. A phosphothreonine mark is found at Thr-69, Thr-71, and Thr-111. 2 stretches are compositionally biased toward basic and acidic residues: residues 179 to 189 (EGGRHAPELLK) and 207 to 216 (GGKERPGSKE). Ser-214 carries the phosphoserine modification. Residues 217-228 (EVDEDRDVDESS) are compositionally biased toward acidic residues. Residues 314-323 (EQAHSEEHLR) are compositionally biased toward basic and acidic residues. Low complexity predominate over residues 325-340 (AAFPGAPGEGPEAQGP). Composition is skewed to basic and acidic residues over residues 344–356 (EDAK…EPSE) and 381–393 (KSKD…DKKA). Over residues 440–452 (KYVSSVTPRTGSS) the composition is skewed to polar residues. Residues 455–466 (KEMKLKGADGKT) show a composition bias toward basic and acidic residues. Thr-470 bears the Phosphothreonine mark. Residue Arg-472 is modified to Omega-N-methylarginine. Lys-480 bears the N6,N6-dimethyllysine; alternate mark. At Lys-480 the chain carries N6-acetyllysine; alternate. Phosphothreonine is present on residues Thr-486, Thr-492, and Thr-498. Residues 491-503 (KTPPAPKTPPSSG) are compositionally biased toward pro residues. Phosphoserine occurs at positions 502, 508, and 512. The span at 504–531 (EPPKSGDRSGYSSPGSPGTPGSRSRTPS) shows a compositional bias: low complexity. At Tyr-514 the chain carries Phosphotyrosine. Phosphoserine is present on residues Ser-515, Ser-516, and Ser-519. Residues Thr-522 and Thr-529 each carry the phosphothreonine modification. Ser-531 is subject to Phosphoserine. Position 534 is a phosphothreonine (Thr-534). Lys-542 bears the N6-acetyllysine mark. A Phosphothreonine modification is found at Thr-548. A phosphoserine mark is found at Ser-552 and Ser-554. 4 Tau/MAP repeats span residues 561–591 (QTAP…GGGK), 592–622 (VQII…GGGS), 623–653 (VQIV…GGGQ), and 654–685 (VEVK…GGGH). Lys-571 participates in a covalent cross-link: Glycyl lysine isopeptide (Lys-Gly) (interchain with G-Cter in ubiquitin). The residue at position 576 (Lys-576) is an N6-acetyllysine; alternate. Position 576 is an N6-methyllysine; alternate (Lys-576). Lys-576 participates in a covalent cross-link: Glycyl lysine isopeptide (Lys-Gly) (interchain with G-Cter in ubiquitin); alternate. Ser-579 bears the Phosphoserine mark. Lys-584 participates in a covalent cross-link: Glycyl lysine isopeptide (Lys-Gly) (interchain with G-Cter in ubiquitin). Lys-598 carries the N6-acetyllysine; alternate modification. Residue Lys-598 forms a Glycyl lysine isopeptide (Lys-Gly) (interchain with G-Cter in ubiquitin); alternate linkage. 2 positions are modified to phosphoserine: Ser-602 and Ser-606. Lys-607 bears the N6-acetyllysine mark. At Ser-610 the chain carries Phosphoserine. Residue Lys-615 is modified to N6-acetyllysine; alternate. Lys-615 is covalently cross-linked (Glycyl lysine isopeptide (Lys-Gly) (interchain with G-Cter in ubiquitin); alternate). Ser-622 carries the post-translational modification Phosphoserine. Lys-628 bears the N6,N6-dimethyllysine; alternate mark. Residues Lys-628, Lys-634, and Lys-638 each carry the N6-acetyllysine; alternate modification. Residues Lys-628, Lys-634, and Lys-638 each participate in a glycyl lysine isopeptide (Lys-Gly) (interchain with G-Cter in ubiquitin); alternate cross-link. Ser-641 is subject to Phosphoserine. 3 positions are modified to N6-acetyllysine; alternate: Lys-648, Lys-660, and Lys-664. Glycyl lysine isopeptide (Lys-Gly) (interchain with G-Cter in ubiquitin); alternate cross-links involve residues Lys-648, Lys-660, and Lys-664. Omega-N-methylarginine is present on Arg-666. Ser-669 carries the post-translational modification Phosphoserine. Lys-670 is covalently cross-linked (Glycyl lysine isopeptide (Lys-Gly) (interchain with G-Cter in ubiquitin)). The residue at position 673 (Ser-673) is a Phosphoserine. Position 686 is an N6-acetyllysine; alternate (Lys-686). Residue Lys-686 forms a Glycyl lysine isopeptide (Lys-Gly) (interchain with G-Cter in ubiquitin); alternate linkage. Lys-692 participates in a covalent cross-link: Glycyl lysine isopeptide (Lys-Gly) (interchain with G-Cter in ubiquitin). Lys-702 is subject to N6-acetyllysine; alternate. Residue Lys-702 forms a Glycyl lysine isopeptide (Lys-Gly) (interchain with G-Cter in ubiquitin); alternate linkage. The residue at position 711 (Tyr-711) is a Phosphotyrosine. Residues Ser-713 and Ser-717 each carry the phosphoserine modification. Residues 715–734 (VVSGDTSPRHLSNVSSTGSI) are disordered. Positions 718-733 (GDTSPRHLSNVSSTGS) are enriched in polar residues. Thr-720 bears the Phosphothreonine mark. Residues Ser-721, Ser-726, Ser-733, and Ser-739 each carry the phosphoserine modification. Thr-744 is subject to Phosphothreonine.

As to quaternary structure, interacts with MARK1, MARK2, MARK3 and MARK4. Interacts with SQSTM1 when polyubiquitinated. Interacts with PSMC2 through SQSTM1. Interacts with FKBP4. Binds to CSNK1D. Interacts with SGK1. Interacts with EPM2A; the interaction dephosphorylates MAPT at Ser-396. Interacts with PIN1. Interacts with LRRK2. Interacts with LRP1, leading to endocytosis; this interaction is reduced in the presence of LRPAP1/RAP. Polyubiquitinated. Requires functional TRAF6 and may provoke SQSTM1-dependent degradation by the proteasome. In terms of processing, phosphorylation at various serine and threonine residues in S-P or T-P motifs by proline-directed protein kinases (PDPK1, CDK1, CDK5, GSK3, MAPK) (a few sites per protein in interphase, more in mitosis), and at serine residues in K-X-G-S motifs by MAP/microtubule affinity-regulating kinase (MARK1, MARK2, MARK3 or MARK4), causing detachment from microtubules, and their disassembly. Phosphorylation at Ser-579 by BRSK1 and BRSK2 in neurons affects ability to bind microtubules and plays a role in neuron polarization. Phosphorylated by PHK. Dephosphorylation at several serine and threonine residues by the serine/threonine phosphatase PPP5C. Phosphorylation at Ser-214 by SGK1 mediates microtubule depolymerization and neurite formation in hippocampal neurons.

It localises to the cytoplasm. The protein resides in the cytosol. The protein localises to the cell membrane. Its subcellular location is the cytoskeleton. It is found in the cell projection. It localises to the axon. The protein resides in the dendrite. Functionally, promotes microtubule assembly and stability, and might be involved in the establishment and maintenance of neuronal polarity. The C-terminus binds axonal microtubules while the N-terminus binds neural plasma membrane components, suggesting that tau functions as a linker protein between both. Axonal polarity is predetermined by tau localization (in the neuronal cell) in the domain of the cell body defined by the centrosome. The short isoforms allow plasticity of the cytoskeleton whereas the longer isoforms may preferentially play a role in its stabilization. The chain is Microtubule-associated protein tau (MAPT) from Pongo pygmaeus (Bornean orangutan).